We begin with the raw amino-acid sequence, 423 residues long: Serine--tRNA ligase (423 aa).

The segment at 107-130 (PHDSVPDGKSENDNREIRQWGAPP) is disordered. A compositionally biased stretch (basic and acidic residues) spans 110–124 (SVPDGKSENDNREIR). 231 to 233 (TGE) serves as a coordination point for L-serine. 262–264 (RSE) provides a ligand contact to ATP. Glu285 contacts L-serine. ATP is bound at residue 349 to 352 (EISS). Ser385 provides a ligand contact to L-serine.

This sequence belongs to the class-II aminoacyl-tRNA synthetase family. Type-1 seryl-tRNA synthetase subfamily. Homodimer. The tRNA molecule binds across the dimer.

It localises to the cytoplasm. It carries out the reaction tRNA(Ser) + L-serine + ATP = L-seryl-tRNA(Ser) + AMP + diphosphate + H(+). The enzyme catalyses tRNA(Sec) + L-serine + ATP = L-seryl-tRNA(Sec) + AMP + diphosphate + H(+). It functions in the pathway aminoacyl-tRNA biosynthesis; selenocysteinyl-tRNA(Sec) biosynthesis; L-seryl-tRNA(Sec) from L-serine and tRNA(Sec): step 1/1. Functionally, catalyzes the attachment of serine to tRNA(Ser). Is also able to aminoacylate tRNA(Sec) with serine, to form the misacylated tRNA L-seryl-tRNA(Sec), which will be further converted into selenocysteinyl-tRNA(Sec). The protein is Serine--tRNA ligase of Coxiella burnetii (strain Dugway 5J108-111).